A 120-amino-acid polypeptide reads, in one-letter code: Large ribosomal subunit protein uL18 (120 aa).

The protein belongs to the universal ribosomal protein uL18 family. As to quaternary structure, part of the 50S ribosomal subunit; part of the 5S rRNA/L5/L18/L25 subcomplex. Contacts the 5S and 23S rRNAs.

This is one of the proteins that bind and probably mediate the attachment of the 5S RNA into the large ribosomal subunit, where it forms part of the central protuberance. The protein is Large ribosomal subunit protein uL18 of Lawsonia intracellularis (strain PHE/MN1-00).